The primary structure comprises 187 residues: UPF0340 protein SPD_0576 (187 aa).

This sequence belongs to the UPF0340 family.

This is UPF0340 protein SPD_0576 from Streptococcus pneumoniae serotype 2 (strain D39 / NCTC 7466).